A 585-amino-acid chain; its full sequence is ATP-dependent lipid A-core flippase (585 aa).

Helical transmembrane passes span phenylalanine 25–isoleucine 45, tryptophan 63–leucine 83, isoleucine 127–isoleucine 146, leucine 150–threonine 170, glutamine 250–leucine 270, and glutamine 277–leucine 297. In terms of domain architecture, ABC transmembrane type-1 spans leucine 26–arginine 309. The ABC transporter domain maps to valine 341–methionine 577. An ATP-binding site is contributed by glycine 375–threonine 382.

This sequence belongs to the ABC transporter superfamily. Lipid exporter (TC 3.A.1.106) family. Homodimer.

It is found in the cell inner membrane. It catalyses the reaction ATP + H2O + lipid A-core oligosaccharideSide 1 = ADP + phosphate + lipid A-core oligosaccharideSide 2.. Involved in lipopolysaccharide (LPS) biosynthesis. Translocates lipid A-core from the inner to the outer leaflet of the inner membrane. Transmembrane domains (TMD) form a pore in the inner membrane and the ATP-binding domain (NBD) is responsible for energy generation. The polypeptide is ATP-dependent lipid A-core flippase (Dechloromonas aromatica (strain RCB)).